We begin with the raw amino-acid sequence, 1127 residues long: Collagen alpha-2(I) chain (1127 aa).

Positions 1-16 are enriched in pro residues; it reads DGKPGLPGPAGPPGPP. The interval 1-1017 is disordered; the sequence is DGKPGLPGPA…GPAGPAGGGY (1017 aa). Low complexity-rich tracts occupy residues 171–191, 221–230, and 237–258; these read AGPA…AAGP, EPGPNGAVGP, and PGNN…AGAP. Positions 260 to 270 are enriched in pro residues; the sequence is FPGPRGGPGPQ. Residues 272-282 are compositionally biased toward low complexity; the sequence is PQGAAGQRGLA. Residues 289–298 show a composition bias toward gly residues; sequence GVKGDGGPKG. Low complexity-rich tracts occupy residues 326-345, 355-398, 436-449, and 461-473; these read ATGP…RGMP, AAGP…AGPA, APGP…TGAT, and QGAA…QGLP. A compositionally biased stretch (gly residues) spans 474 to 483; that stretch reads GPAGGAGEAG. Residues 508–518 show a composition bias toward low complexity; sequence NPGAAGASGPQ. Residues 531–568 show a composition bias toward gly residues; that stretch reads GTDGGKGEPGAAGAAGGPGHQGPGGMPGERGAAGGPGG. Residues 569-580 are compositionally biased toward basic and acidic residues; the sequence is KGEKGEAGHRGP. Composition is skewed to low complexity over residues 611–625 and 634–647; these read SGSF…ARGA and PAGA…PGAD. The span at 657-666 shows a compositional bias: gly residues; that stretch reads GPSGGKGESG. 3 stretches are compositionally biased toward low complexity: residues 667-692, 703-730, and 758-778; these read PSGP…TGAR, FPGA…PAGK, and SGEK…PLGL. Over residues 792–801 the composition is skewed to gly residues; that stretch reads GSPGGAGAVG. Low complexity-rich tracts occupy residues 802-824 and 860-872; these read EAGR…LGLP and PGSS…AGAP. Residues 876-897 show a composition bias toward gly residues; it reads GPSGGAGRPGNRGESGPGGAAG. A compositionally biased stretch (low complexity) spans 898-913; that stretch reads AVGPAGARGAAGPSGP. A compositionally biased stretch (basic and acidic residues) spans 914 to 928; sequence RGEKGVAGEKGERGM. Composition is skewed to low complexity over residues 937 to 956 and 986 to 997; these read LQGM…AGPN and PGARGPPGYVGP. The segment covering 998 to 1010 has biased composition (pro residues); sequence AGPPGXPGLPGPA. In terms of domain architecture, Fibrillar collagen NC1 spans 1093–1127; the sequence is RTNKPSRLPLLDLAPLDLGGADQEFGLDLGPVCFK.

The protein belongs to the fibrillar collagen family.

It localises to the secreted. The protein localises to the extracellular space. The protein resides in the extracellular matrix. This Epinephelus marginatus (Dusky grouper) protein is Collagen alpha-2(I) chain.